The following is a 904-amino-acid chain: UPF0182 protein CKL_0015 (904 aa).

Transmembrane regions (helical) follow at residues 9-29 (SLIV…DFII), 47-67 (LIAI…SIVL), 96-116 (IFII…AATY), 157-177 (ILSL…TLSV), 208-228 (LAVL…LKCI), 253-273 (YKII…SILV), and 279-299 (IIVS…SYTV).

It belongs to the UPF0182 family.

The protein localises to the cell membrane. The sequence is that of UPF0182 protein CKL_0015 from Clostridium kluyveri (strain ATCC 8527 / DSM 555 / NBRC 12016 / NCIMB 10680 / K1).